Here is a 513-residue protein sequence, read N- to C-terminus: ATP synthase subunit alpha (513 aa).

Residue 169 to 176 (GDRQTGKT) coordinates ATP.

The protein belongs to the ATPase alpha/beta chains family. As to quaternary structure, F-type ATPases have 2 components, CF(1) - the catalytic core - and CF(0) - the membrane proton channel. CF(1) has five subunits: alpha(3), beta(3), gamma(1), delta(1), epsilon(1). CF(0) has three main subunits: a(1), b(2) and c(9-12). The alpha and beta chains form an alternating ring which encloses part of the gamma chain. CF(1) is attached to CF(0) by a central stalk formed by the gamma and epsilon chains, while a peripheral stalk is formed by the delta and b chains.

The protein localises to the cell inner membrane. It carries out the reaction ATP + H2O + 4 H(+)(in) = ADP + phosphate + 5 H(+)(out). Produces ATP from ADP in the presence of a proton gradient across the membrane. The alpha chain is a regulatory subunit. This chain is ATP synthase subunit alpha, found in Vibrio cholerae serotype O1 (strain ATCC 39541 / Classical Ogawa 395 / O395).